The chain runs to 197 residues: uncharacterized protein (197 aa).

This is an uncharacterized protein from Bacillus subtilis (strain 168).